The following is a 430-amino-acid chain: Histidine--tRNA ligase (430 aa).

The protein belongs to the class-II aminoacyl-tRNA synthetase family. As to quaternary structure, homodimer.

Its subcellular location is the cytoplasm. The enzyme catalyses tRNA(His) + L-histidine + ATP = L-histidyl-tRNA(His) + AMP + diphosphate + H(+). This chain is Histidine--tRNA ligase, found in Gloeothece citriformis (strain PCC 7424) (Cyanothece sp. (strain PCC 7424)).